A 420-amino-acid polypeptide reads, in one-letter code: Putative competence-damage inducible protein (420 aa).

Belongs to the CinA family.

The chain is Putative competence-damage inducible protein from Halalkalibacterium halodurans (strain ATCC BAA-125 / DSM 18197 / FERM 7344 / JCM 9153 / C-125) (Bacillus halodurans).